A 70-amino-acid chain; its full sequence is Large ribosomal subunit protein eL38 (70 aa).

It belongs to the eukaryotic ribosomal protein eL38 family.

The sequence is that of Large ribosomal subunit protein eL38 (RpL38) from Aedes aegypti (Yellowfever mosquito).